The following is an 863-amino-acid chain: Leucine--tRNA ligase (863 aa).

The 'HIGH' region signature appears at 42 to 52 (PYPSGKLHMGH). The 'KMSKS' region signature appears at 623 to 627 (KMSKS). An ATP-binding site is contributed by K626.

This sequence belongs to the class-I aminoacyl-tRNA synthetase family.

The protein resides in the cytoplasm. The enzyme catalyses tRNA(Leu) + L-leucine + ATP = L-leucyl-tRNA(Leu) + AMP + diphosphate. This is Leucine--tRNA ligase from Paraburkholderia xenovorans (strain LB400).